The primary structure comprises 324 residues: Phospho-N-acetylmuramoyl-pentapeptide-transferase (324 aa).

Helical transmembrane passes span 9-29 (TFAV…PFLV), 53-73 (TMGA…FSFI), 77-97 (VSAA…LGFL), 117-137 (FLGQ…SDFA), 149-169 (IDLG…FSNA), 176-196 (LDGL…VIAF), 201-221 (MDVA…LLFN), 227-247 (IFMG…VSIL), 253-273 (LLLL…LQVF), and 304-324 (VLTF…VVIF).

This sequence belongs to the glycosyltransferase 4 family. MraY subfamily. It depends on Mg(2+) as a cofactor.

It localises to the cell membrane. The enzyme catalyses UDP-N-acetyl-alpha-D-muramoyl-L-alanyl-gamma-D-glutamyl-meso-2,6-diaminopimeloyl-D-alanyl-D-alanine + di-trans,octa-cis-undecaprenyl phosphate = di-trans,octa-cis-undecaprenyl diphospho-N-acetyl-alpha-D-muramoyl-L-alanyl-D-glutamyl-meso-2,6-diaminopimeloyl-D-alanyl-D-alanine + UMP. It participates in cell wall biogenesis; peptidoglycan biosynthesis. Catalyzes the initial step of the lipid cycle reactions in the biosynthesis of the cell wall peptidoglycan: transfers peptidoglycan precursor phospho-MurNAc-pentapeptide from UDP-MurNAc-pentapeptide onto the lipid carrier undecaprenyl phosphate, yielding undecaprenyl-pyrophosphoryl-MurNAc-pentapeptide, known as lipid I. This is Phospho-N-acetylmuramoyl-pentapeptide-transferase from Listeria innocua serovar 6a (strain ATCC BAA-680 / CLIP 11262).